The sequence spans 74 residues: Conotoxin Vc6.8 (74 aa).

The first 19 residues, 1-19 (MEKLTILLLVAAVLMSTQA), serve as a signal peptide directing secretion. Positions 20–34 (LMQEQRQKAKINLFS) are excised as a propeptide. 3 disulfide bridges follow: cysteine 49–cysteine 62, cysteine 55–cysteine 66, and cysteine 61–cysteine 70.

This sequence belongs to the conotoxin O2 superfamily. Expressed by the venom duct.

It is found in the secreted. Its function is as follows. Inhibits voltage-gated ion channels. This is Conotoxin Vc6.8 from Conus victoriae (Queen Victoria cone).